The primary structure comprises 552 residues: Nucleoside-diphosphatase mig-23 (552 aa).

Residues 1-6 are Cytoplasmic-facing; the sequence is MRVSLR. A helical membrane pass occupies residues 7 to 27; sequence FTILAVSAMIFFPVIVFIYVV. Over 28-489 the chain is Lumenal; it reads EAHTSPKVIA…IVKETHSSSE (462 aa). Glu174 functions as the Proton acceptor in the catalytic mechanism. Asn190 and Asn284 each carry an N-linked (GlcNAc...) asparagine glycan. Residues 490-510 traverse the membrane as a helical segment; it reads SLWAPLFFLSAVFCLFVLVCA. Topologically, residues 511–552 are cytoplasmic; sequence KEQSVLCFDDKRRSSFGMSRSQYSYKMLKENRTSSSFLENFA.

The protein belongs to the GDA1/CD39 NTPase family. Expressed in body wall muscles.

It localises to the golgi apparatus membrane. The catalysed reaction is a ribonucleoside 5'-diphosphate + H2O = a ribonucleoside 5'-phosphate + phosphate + H(+). Its function is as follows. Seems to be able to hydrolyze ADP, UDP and GDP. Supports mig-17 glycosylation and surface expression, which is required for proper migration of distal tip cells during gonad morphogenesis. This Caenorhabditis elegans protein is Nucleoside-diphosphatase mig-23 (mig-23).